Reading from the N-terminus, the 237-residue chain is Phosphoribosylaminoimidazole-succinocarboxamide synthase (237 aa).

It belongs to the SAICAR synthetase family.

The enzyme catalyses 5-amino-1-(5-phospho-D-ribosyl)imidazole-4-carboxylate + L-aspartate + ATP = (2S)-2-[5-amino-1-(5-phospho-beta-D-ribosyl)imidazole-4-carboxamido]succinate + ADP + phosphate + 2 H(+). It functions in the pathway purine metabolism; IMP biosynthesis via de novo pathway; 5-amino-1-(5-phospho-D-ribosyl)imidazole-4-carboxamide from 5-amino-1-(5-phospho-D-ribosyl)imidazole-4-carboxylate: step 1/2. The sequence is that of Phosphoribosylaminoimidazole-succinocarboxamide synthase from Photorhabdus laumondii subsp. laumondii (strain DSM 15139 / CIP 105565 / TT01) (Photorhabdus luminescens subsp. laumondii).